The sequence spans 1088 residues: RNA-directed RNA polymerase (1088 aa).

The RdRp catalytic domain maps to 501–687 (LSYGDVTRFL…AKRYIAGGKI (187 aa)).

This sequence belongs to the reoviridae RNA-directed RNA polymerase family. In terms of assembly, interacts with VP3 (Potential). Interacts with VP2; this interaction activates VP1. Interacts with NSP5; this interaction is probably necessary for the formation of functional virus factories. Interacts with NSP2; this interaction is weak. Mg(2+) is required as a cofactor.

The protein localises to the virion. It carries out the reaction RNA(n) + a ribonucleoside 5'-triphosphate = RNA(n+1) + diphosphate. In terms of biological role, RNA-directed RNA polymerase that is involved in both transcription and genome replication. Together with VP3 capping enzyme, forms an enzyme complex positioned near the channels situated at each of the five-fold vertices of the core. Following infection, the outermost layer of the virus is lost, leaving a double-layered particle (DLP) made up of the core and VP6 shell. VP1 then catalyzes the transcription of fully conservative plus-strand genomic RNAs that are extruded through the DLP's channels into the cytoplasm where they function as mRNAs for translation of viral proteins. One copy of each of the viral (+)RNAs is also recruited during core assembly, together with newly synthesized polymerase complexes and VP2. The polymerase of these novo-formed particles catalyzes the synthesis of complementary minus-strands leading to dsRNA formation. To do so, the polymerase specifically recognizes and binds 4 bases 5'-UGUG-3' in the conserved 3'-sequence of plus-strand RNA templates. VP2 presumably activates the autoinhibited VP1-RNA complex to coordinate packaging and genome replication. Once dsRNA synthesis is complete, the polymerase switches to the transcriptional mode, thus providing secondary transcription. The protein is RNA-directed RNA polymerase of Chlorocebus pygerythrus (Vervet monkey).